Consider the following 205-residue polypeptide: Large ribosomal subunit protein uL4 (205 aa).

Positions 43 to 77 (RRRSGTASTKGRSDVAGSRAKLFRQKGTGRARRGD) are disordered. The span at 63–73 (KLFRQKGTGRA) shows a compositional bias: basic residues.

Belongs to the universal ribosomal protein uL4 family. As to quaternary structure, part of the 50S ribosomal subunit.

Its function is as follows. One of the primary rRNA binding proteins, this protein initially binds near the 5'-end of the 23S rRNA. It is important during the early stages of 50S assembly. It makes multiple contacts with different domains of the 23S rRNA in the assembled 50S subunit and ribosome. Forms part of the polypeptide exit tunnel. The sequence is that of Large ribosomal subunit protein uL4 from Desulfosudis oleivorans (strain DSM 6200 / JCM 39069 / Hxd3) (Desulfococcus oleovorans).